The chain runs to 259 residues: Flagellar L-ring protein (259 aa).

The signal sequence occupies residues 1-15; that stretch reads MKRISLIALVTIMSG. A lipid anchor (N-palmitoyl cysteine) is attached at cysteine 16. Cysteine 16 carries the S-diacylglycerol cysteine lipid modification.

Belongs to the FlgH family. As to quaternary structure, the basal body constitutes a major portion of the flagellar organelle and consists of four rings (L,P,S, and M) mounted on a central rod.

The protein resides in the cell outer membrane. Its subcellular location is the bacterial flagellum basal body. In terms of biological role, assembles around the rod to form the L-ring and probably protects the motor/basal body from shearing forces during rotation. The chain is Flagellar L-ring protein from Vibrio vulnificus (strain CMCP6).